We begin with the raw amino-acid sequence, 389 residues long: Zinc finger C2HC domain-containing protein 1C homolog (389 aa).

Disordered regions lie at residues 16 to 44 and 84 to 115; these read MLPHNTTEAPGPHSAKQDSYEQGDSSQQS and SYPHCTGISQQDPESDSQGQGKGLFYSSGPQS. Composition is skewed to polar residues over residues 35-44 and 90-102; these read YEQGDSSQQS and GISQQDPESDSQG. A coiled-coil region spans residues 211–266; it reads VQIRRLEAAGESLEEEIRRKQILLRGKLKKTEEELRRIQMQKEQAKENENRELQKI. 2 disordered regions span residues 301-320 and 343-389; these read REDETWGRSQQNSSPFQLSD and SELS…PQLG. The span at 307 to 317 shows a compositional bias: polar residues; it reads GRSQQNSSPFQ. Low complexity predominate over residues 368 to 382; the sequence is SSLSMAPDSSGSSGS.

This sequence belongs to the ZC2HC1 family.

The polypeptide is Zinc finger C2HC domain-containing protein 1C homolog (ZC2HC1C) (Pongo abelii (Sumatran orangutan)).